We begin with the raw amino-acid sequence, 94 residues long: RING finger protein Z (94 aa).

A compositionally biased stretch (polar residues) spans 1 to 19 (MGNCNGASKSNQPDSSRVT). Residues 1-20 (MGNCNGASKSNQPDSSRVTQ) are disordered. Gly2 carries N-myristoyl glycine; by host lipidation. The RING-type; atypical zinc-finger motif lies at 39-75 (CKCCWFADTNLITCNDHYLCLRCHQVMLRNSDLCNIC). The PTAP/PSAP motif motif lies at 89–92 (PTAP).

This sequence belongs to the arenaviridae Z protein family. In terms of assembly, interacts with protein NP; this interaction probably directs the encapsidated genome to budding sites. Interacts (via RING domain) with polymerase L; this interaction inhibits viral transcription and replication, Z partially blocks the product exit tunnel for the releasing nascent RNA product. Interacts with the glycoprotein complex; this interaction plays a role in virion budding. Interacts with host eIF4E; this interaction results in eIF4E reduced affinity for its substrate, the 5'-m7 G cap structure. Interacts (via late-budding domain) with host TSG101; this interaction is essential for budding and release of viral particles. Interacts with host RPLP0; this interaction may serve to load ribosome-like particles inside the virion. Interacts with host PML; this interaction induces PML bodies redistribution in the cytoplasm upon viral infection. Post-translationally, myristoylation is required for the role of RING finger protein Z in assembly and budding.

It is found in the virion. The protein resides in the host cytoplasm. It localises to the host perinuclear region. Its subcellular location is the host cell membrane. In terms of biological role, plays a crucial role in virion assembly and budding. Expressed late in the virus life cycle, it acts as an inhibitor of viral transcription and RNA synthesis by interacting with the viral polymerase L. Presumably recruits the NP encapsidated genome to cellular membranes at budding sites via direct interaction with NP. Plays critical roles in the final steps of viral release by interacting with host TSG101, a member of the vacuolar protein-sorting pathway and using other cellular host proteins involved in vesicle formation pathway. The budding of the virus progeny occurs after association of protein Z with the viral glycoprotein complex SSP-GP1-GP2 at the cell periphery, step that requires myristoylation of protein Z. Also selectively represses protein production by associating with host eIF4E. In cell-based minigenome assay, has an inhibitory effect on the ribonucleoprotein machinery (vRNP), which is responsible for the replication and transcription of the viral genome. This Akodon azarae (Azara's grass mouse) protein is RING finger protein Z.